The sequence spans 423 residues: D-tagatose-1,6-bisphosphate aldolase subunit GatZ (423 aa).

It belongs to the GatZ/KbaZ family. GatZ subfamily. Forms a complex with GatY.

It participates in carbohydrate metabolism; D-tagatose 6-phosphate degradation; D-glyceraldehyde 3-phosphate and glycerone phosphate from D-tagatose 6-phosphate: step 2/2. Component of the tagatose-1,6-bisphosphate aldolase GatYZ that is required for full activity and stability of the Y subunit. Could have a chaperone-like function for the proper and stable folding of GatY. When expressed alone, GatZ does not show any aldolase activity. Is involved in the catabolism of galactitol. The sequence is that of D-tagatose-1,6-bisphosphate aldolase subunit GatZ from Salmonella enteritidis PT4 (strain P125109).